Consider the following 214-residue polypeptide: Acyl-homoserine-lactone synthase (214 aa).

This sequence belongs to the autoinducer synthase family.

It carries out the reaction a fatty acyl-[ACP] + S-adenosyl-L-methionine = an N-acyl-L-homoserine lactone + S-methyl-5'-thioadenosine + holo-[ACP] + H(+). Functionally, required for the synthesis of autoinducer molecules such as OHHL (N-(3-oxohexanoyl)-L-homoserine lactone), and HHL (N-hexanoyl-L-homoserine lactone). The polypeptide is Acyl-homoserine-lactone synthase (yenI) (Yersinia enterocolitica).